The primary structure comprises 135 residues: MGYRKLGRTSSQRKALLRDLATDLIVFERIETTEARAKEIRKVVEKLITSGKKGDLHARRQAAAFIRHEVVEVVQVDAKGKDGSTVKKNRPVYALQKLFDDVAPRYAERQGGYTRILKKGPRRGDGAPMVIIELV.

Belongs to the bacterial ribosomal protein bL17 family. As to quaternary structure, part of the 50S ribosomal subunit. Contacts protein L32.

The protein is Large ribosomal subunit protein bL17 of Listeria monocytogenes serotype 4b (strain CLIP80459).